The sequence spans 430 residues: Histidine--tRNA ligase (430 aa).

This sequence belongs to the class-II aminoacyl-tRNA synthetase family. As to quaternary structure, homodimer.

The protein resides in the cytoplasm. It carries out the reaction tRNA(His) + L-histidine + ATP = L-histidyl-tRNA(His) + AMP + diphosphate + H(+). The protein is Histidine--tRNA ligase of Chlamydia felis (strain Fe/C-56) (Chlamydophila felis).